We begin with the raw amino-acid sequence, 102 residues long: uncharacterized protein (102 aa).

The tract at residues 1–102 (MPVEQDGLTG…LANIREQNHQ (102 aa)) is disordered.

This is an uncharacterized protein from Caenorhabditis elegans.